Here is a 111-residue protein sequence, read N- to C-terminus: Universal stress protein B (111 aa).

2 consecutive transmembrane segments (helical) span residues 1–21 (MIST…NMAR) and 90–110 (FILT…LMIW).

It belongs to the universal stress protein B family.

It is found in the cell inner membrane. This Escherichia coli O45:K1 (strain S88 / ExPEC) protein is Universal stress protein B.